The following is a 138-amino-acid chain: Large ribosomal subunit protein uL16 (138 aa).

Basic residues predominate over residues 1-17 (MLIPRKVKHRKQHHPRQ). The tract at residues 1-22 (MLIPRKVKHRKQHHPRQRGIAS) is disordered.

It belongs to the universal ribosomal protein uL16 family. As to quaternary structure, part of the 50S ribosomal subunit.

Binds 23S rRNA and is also seen to make contacts with the A and possibly P site tRNAs. The chain is Large ribosomal subunit protein uL16 from Mycobacterium tuberculosis (strain ATCC 25177 / H37Ra).